Reading from the N-terminus, the 225-residue chain is Prolactin (225 aa).

The signal sequence occupies residues 1-28 (MTIQGSDRKGTLLLLVMSNLLFCQNVHP). Cys-32 and Cys-37 are disulfide-bonded. Phosphoserine occurs at positions 52 and 116. Cystine bridges form between Cys-84-Cys-200 and Cys-217-Cys-225.

This sequence belongs to the somatotropin/prolactin family. As to quaternary structure, interacts with PRLR.

Its subcellular location is the secreted. Functionally, prolactin acts primarily on the mammary gland by promoting lactation. This Alexandromys montebelli (Japanese grass vole) protein is Prolactin (PRL).